The following is a 366-amino-acid chain: Palmitoyltransferase ZDHHC2 (366 aa).

Residues methionine 1–arginine 15 lie on the Cytoplasmic side of the membrane. Residues valine 16–tyrosine 36 form a helical membrane-spanning segment. At alanine 37 to asparagine 47 the chain is on the lumenal side. A helical transmembrane segment spans residues isoleucine 48–serine 68. Over tyrosine 69–lysine 169 the chain is Cytoplasmic. In terms of domain architecture, DHHC spans arginine 126–alanine 176. Cysteine 156 acts as the S-palmitoyl cysteine intermediate in catalysis. Residues phenylalanine 170–leucine 190 traverse the membrane as a helical segment. Topologically, residues glutamine 191 to lysine 207 are lumenal. Residues phenylalanine 208–phenylalanine 228 form a helical membrane-spanning segment. Residues glycine 229–threonine 366 are Cytoplasmic-facing. Positions valine 297–asparagine 316 are enriched in polar residues. The segment at valine 297–threonine 366 is disordered. A mediates localization to plasma membrane and recycling endosomes region spans residues asparagine 298 to threonine 366. Residues proline 326–lysine 336 show a composition bias toward basic and acidic residues. The short motif at leucine 334 to leucine 335 is the Non-canonical dileucine endocytic signal element. Polar residues predominate over residues aspartate 337–asparagine 347. Positions asparagine 357–leucine 360 match the NPxY-like endocytic signal motif.

This sequence belongs to the DHHC palmitoyltransferase family. Monomer. Homodimer. The monomeric form has a higher catalytic activity. Autopalmitoylated. In terms of tissue distribution, expressed in all brain regions.

The protein localises to the postsynaptic density. It is found in the postsynaptic recycling endosome membrane. Its subcellular location is the cell membrane. The protein resides in the endoplasmic reticulum membrane. It localises to the golgi apparatus membrane. The catalysed reaction is L-cysteinyl-[protein] + hexadecanoyl-CoA = S-hexadecanoyl-L-cysteinyl-[protein] + CoA. It carries out the reaction L-cysteinyl-[protein] + tetradecanoyl-CoA = S-tetradecanoyl-L-cysteinyl-[protein] + CoA. The enzyme catalyses L-cysteinyl-[protein] + octadecanoyl-CoA = S-octadecanoyl-L-cysteinyl-[protein] + CoA. Functionally, palmitoyltransferase that catalyzes the addition of palmitate onto various protein substrates and is involved in a variety of cellular processes. Has no stringent fatty acid selectivity and in addition to palmitate can also transfer onto target proteins myristate from tetradecanoyl-CoA and stearate from octadecanoyl-CoA. In the nervous system, plays a role in long term synaptic potentiation by palmitoylating AKAP5 through which it regulates protein trafficking from the dendritic recycling endosomes to the plasma membrane and controls both structural and functional plasticity at excitatory synapses. In dendrites, mediates the palmitoylation of DLG4 when synaptic activity decreases and induces synaptic clustering of DLG4 and associated AMPA-type glutamate receptors. Also mediates the de novo and turnover palmitoylation of RGS7BP, a shuttle for Gi/o-specific GTPase-activating proteins/GAPs, promoting its localization to the plasma membrane in response to the activation of G protein-coupled receptors. Through the localization of these GTPase-activating proteins/GAPs, it also probably plays a role in G protein-coupled receptors signaling in neurons. Also probably plays a role in cell adhesion by palmitoylating CD9 and CD151 to regulate their expression and function. Palmitoylates the endoplasmic reticulum protein CKAP4 and regulates its localization to the plasma membrane. Could also palmitoylate LCK and regulate its localization to the plasma membrane. In Mus musculus (Mouse), this protein is Palmitoyltransferase ZDHHC2.